Consider the following 230-residue polypeptide: Methyltransferase aurB (230 aa).

The protein belongs to the methyltransferase superfamily.

It functions in the pathway polyketide biosynthesis. Methyltransferase; part of the gene cluster that mediates the biosynthesis of aurovertins, fungal polyketides that exhibit potent inhibition of adenosine triphosphate synthase. Tha biosynthesis starts with the HR-PKS aurA that selects propionate as the starter unit; synthesizes a hexa-ene chain through the repeated functions of the KR and DH domains in the first six iterations; selectively introduces three alpha-methyl substitutions at C4, C6, and C16 using the S-adensylmethionine-dependent cMET; and shuts off KR and DH in the last three iterations to afford a 1,3,5-triketo portion that can undergo intramolecular cyclization to yield the alpha-pyrone intermediate. AurE may act as a cyclase and enhances the rate of pyrone formation and product release of aurA. The methyltransferase aurB then methylates the C17 hydroxyl group. C17 methylation is required to initiate epoxidation by the downstream monooxygenase aurC. The monooxygenase aurC and the epoxide hydrolase aurD can iteratively transform the terminal triene portion of the methylated precursor into the dioxabicyclo[3.2.1]octane scaffold of aurovertin E. Epoxidation modifications of the precursor occur in two separate steps; bis-epoxidation of the two terminal olefins takes place first, followed by another epoxidation that occurs at C7-C8 after tetrahydrofuran formation. The O-acyltransferase aurG converts aurovertin E to aurovertin A. The protein is Methyltransferase aurB of Calcarisporium arbuscula (Dendryphion arbuscula).